The chain runs to 63 residues: Overexpressed in colon carcinoma 1 protein homolog (63 aa).

Positions 1–12 (MGCGNSTAASAG) are enriched in low complexity. The disordered stretch occupies residues 1-40 (MGCGNSTAASAGAGQGPAGAAKDVTEESITEDDKRRNYGG).

The protein belongs to the OCC1 family.

This Bos taurus (Bovine) protein is Overexpressed in colon carcinoma 1 protein homolog.